Here is a 298-residue protein sequence, read N- to C-terminus: Protease HtpX homolog (298 aa).

A run of 2 helical transmembrane segments spans residues 14–34 (VVLL…AGYL) and 39–59 (YAMG…SMIF). Histidine 143 provides a ligand contact to Zn(2+). Glutamate 144 is a catalytic residue. Histidine 147 lines the Zn(2+) pocket. Helical transmembrane passes span 158-178 (IAVA…RMLW) and 197-217 (IITL…ASLI). Glutamate 226 contributes to the Zn(2+) binding site.

It belongs to the peptidase M48B family. The cofactor is Zn(2+).

It localises to the cell membrane. The chain is Protease HtpX homolog from Streptococcus pyogenes serotype M6 (strain ATCC BAA-946 / MGAS10394).